Consider the following 284-residue polypeptide: F-box protein PP2-B5 (284 aa).

Residues 32 to 80 (ASFDDLPDDCLAIISSFTSTPRDAFLAALVSKSFGLQFNSDSVWEKFLP) enclose the F-box domain.

In Arabidopsis thaliana (Mouse-ear cress), this protein is F-box protein PP2-B5 (PP2B5).